Consider the following 1247-residue polypeptide: Structural polyprotein (1247 aa).

Positions 36–67 are host transcription inhibition; the sequence is RPAGQLAQLISAVSRLALRTVPQKPRRTRKIK. The segment at 54–103 is disordered; that stretch reads RTVPQKPRRTRKIKKQKQVKQEQQSTTNQKKKAPKQKQTQKKKRPGRRER. 2 stretches are compositionally biased toward basic residues: residues 59 to 71 and 82 to 100; these read KPRR…KQKQ and QKKK…RPGR. The Nuclear localization signal signature appears at 60–98; that stretch reads PRRTRKIKKQKQVKQEQQSTTNQKKKAPKQKQTQKKKRP. A binding to the viral RNA region spans residues 83-113; the sequence is KKKAPKQKQTQKKKRPGRRERMCMKIENDCI. Positions 98–112 are ribosome-binding; that stretch reads PGRRERMCMKIENDC. Cys-112 and Cys-127 are disulfide-bonded. A Peptidase S3 domain is found at 112 to 260; it reads CIFEVRHEGK…KITPEGSVEW (149 aa). The active-site Charge relay system is the His-138. The short motif at 143 to 153 is the Nuclear export signal element; the sequence is IDNADLAKLAF. Residues 154–159 are interaction with spike glycoprotein E2; sequence KRSSKY. Asp-160 (charge relay system) is an active-site residue. The dimerization of the capsid protein stretch occupies residues 182 to 192; that stretch reads PEGYYNWHHGA. Ser-212 functions as the Charge relay system in the catalytic mechanism. The segment at 218–222 is dimerization of the capsid protein; the sequence is DNKGR. A functions as an uncleaved signal peptide for the precursor of protein E3/E2 region spans residues 261–273; that stretch reads SLALPVMCLLANT. 9 disulfides stabilise this stretch: Cys-268-Cys-277, Cys-282-Cys-286, Cys-285-Cys-317, Cys-343-Cys-449, Cys-346-Cys-352, Cys-415-Cys-429, Cys-477-Cys-590, Cys-525-Cys-549, and Cys-527-Cys-544. An N-linked (GlcNAc...) asparagine; by host glycan is attached at Asn-272. N-linked (GlcNAc...) asparagine; by host glycosylation is found at Asn-587 and Asn-669. The chain crosses the membrane as a helical span at residues 692 to 712; the sequence is IAVLAAASIVITSLVGLSLGM. The interaction with the capsid protein stretch occupies residues 715–719; that stretch reads CARRR. S-palmitoyl cysteine; by host attachment occurs at residues Cys-720, Cys-740, and Cys-741. Residues 720–740 traverse the membrane as a helical segment; the sequence is CITPYELTPGATIPFLLGVLC. Positions 720 to 740 are transient transmembrane before p62-6K protein processing; that stretch reads CITPYELTPGATIPFLLGVLC. A disulfide bond links Cys-720 and Cys-741. The chain crosses the membrane as a helical span at residues 763 to 783; sequence PLFWLQLLIPLSAAIVVCNCL. Cystine bridges form between Cys-857–Cys-922, Cys-870–Cys-902, Cys-871–Cys-904, and Cys-876–Cys-886. An E1 fusion peptide loop region spans residues 892–909; it reads VYPFMWGGAYCFCDAENT. N-linked (GlcNAc...) asparagine; by host glycosylation is found at Asn-949 and Asn-1078. 4 cysteine pairs are disulfide-bonded: Cys-1067/Cys-1079, Cys-1109/Cys-1184, Cys-1114/Cys-1188, and Cys-1136/Cys-1178. A helical membrane pass occupies residues 1224 to 1244; sequence GVGLVVAIAALILIIVLCVSF. Cys-1241 carries the S-palmitoyl cysteine; by host lipid modification. Cys-1241 carries the S-stearoyl cysteine; by host lipid modification.

As to quaternary structure, homodimer. Homomultimer. Interacts with host karyopherin KPNA4; this interaction allows the nuclear import of the viral capsid protein. Interacts with spike glycoprotein E2. Interacts with host IRAK1; the interaction leads to inhibition of IRAK1-dependent signaling. In terms of assembly, the precursor of protein E3/E2 and E1 form a heterodimer shortly after synthesis. The precursor of protein E3/E2 and E1 form a heterodimer shortly after synthesis. Processing of the precursor of protein E3/E2 into E2 and E3 results in a heterodimer of the spike glycoproteins E2 and E1. Spike at virion surface are constituted of three E2-E1 heterodimers. After target cell attachment and endocytosis, E1 change conformation to form homotrimers. Interacts with 6K protein. As to quaternary structure, interacts with spike glycoprotein E1. Processing of the precursor of protein E3/E2 into E2 and E3 results in a heterodimer of the spike glycoproteins E2 and E1. Spike at virion surface are constituted of a trimer of E2-E1 heterodimers. Interacts with 6K protein. Interacts with host MXRA8; this interaction mediates virus entry. In terms of assembly, oligomer. Interacts with spike glycoprotein E1. Interacts with spike glycoprotein E2. Structural polyprotein: Specific enzymatic cleavages in vivo yield mature proteins. Capsid protein is auto-cleaved during polyprotein translation, unmasking a signal peptide at the N-terminus of the precursor of E3/E2. The remaining polyprotein is then targeted to the host endoplasmic reticulum, where host signal peptidase cleaves it into pE2, 6K and E1 proteins. pE2 is further processed to mature E3 and E2 by host furin in trans-Golgi vesicle. In terms of processing, palmitoylated via thioester bonds. These palmitoylations may induce disruption of the C-terminus transmembrane. This would result in the reorientation of E2 C-terminus from lumenal to cytoplasmic side. Post-translationally, N-glycosylated. Palmitoylated via thioester bonds.

The protein resides in the virion. The protein localises to the host cytoplasm. It localises to the host cell membrane. Its subcellular location is the host nucleus. It is found in the virion membrane. The protein resides in the host Golgi apparatus. The protein localises to the host trans-Golgi network. It localises to the host endoplasmic reticulum. The catalysed reaction is Autocatalytic release of the core protein from the N-terminus of the togavirus structural polyprotein by hydrolysis of a -Trp-|-Ser- bond.. Forms an icosahedral capsid with a T=4 symmetry composed of 240 copies of the capsid protein surrounded by a lipid membrane through which penetrate 80 spikes composed of trimers of E1-E2 heterodimers. The capsid protein binds to the viral RNA genome at a site adjacent to a ribosome binding site for viral genome translation following genome release. Possesses a protease activity that results in its autocatalytic cleavage from the nascent structural protein. Following its self-cleavage, the capsid protein transiently associates with ribosomes, and within several minutes the protein binds to viral RNA and rapidly assembles into icosahedric core particles. The resulting nucleocapsid eventually associates with the cytoplasmic domain of the spike glycoprotein E2 at the cell membrane, leading to budding and formation of mature virions. In case of infection, new virions attach to target cells and after clathrin-mediated endocytosis their membrane fuses with the host endosomal membrane. This leads to the release of the nucleocapsid into the cytoplasm, followed by an uncoating event necessary for the genomic RNA to become accessible. The uncoating might be triggered by the interaction of capsid proteins with ribosomes. Binding of ribosomes would release the genomic RNA since the same region is genomic RNA-binding and ribosome-binding. Specifically inhibits interleukin-1 receptor-associated kinase 1/IRAK1-dependent signaling during viral entry, representing a means by which the alphaviruses may evade innate immune detection and activation prior to viral gene expression. In terms of biological role, provides the signal sequence for the translocation of the precursor of protein E3/E2 to the host endoplasmic reticulum. Furin-cleaved E3 remains associated with spike glycoprotein E1 and mediates pH protection of the latter during the transport via the secretory pathway. After virion release from the host cell, the assembly protein E3 is gradually released in the extracellular space. Its function is as follows. Plays a role in viral attachment to target host cell, by binding to the cell receptor MXRA8. Synthesized as a p62 precursor which is processed by furin at the cell membrane just before virion budding, giving rise to E2-E1 heterodimer. The p62-E1 heterodimer is stable, whereas E2-E1 is unstable and dissociate at low pH. p62 is processed at the last step, presumably to avoid E1 fusion activation before its final export to cell surface. E2 C-terminus contains a transitory transmembrane that would be disrupted by palmitoylation, resulting in reorientation of the C-terminal tail from lumenal to cytoplasmic side. This step is critical since E2 C-terminus is involved in budding by interacting with capsid proteins. This release of E2 C-terminus in cytoplasm occurs lately in protein export, and precludes premature assembly of particles at the endoplasmic reticulum membrane. Functionally, acts as a viroporin that participates in virus glycoprotein processing and transport to the plasma membrane, cell permeabilization and budding of viral particles. Disrupts the calcium homeostasis of the cell, probably at the endoplasmic reticulum level. This leads to cytoplasmic calcium elevation. Because of its lipophilic properties, the 6K protein is postulated to influence the selection of lipids that interact with the transmembrane domains of the glycoproteins, which, in turn, affects the deformability of the bilayer required for the extreme curvature that occurs as budding proceeds. Present in low amount in virions, about 3% compared to viral glycoproteins. Class II viral fusion protein. Fusion activity is inactive as long as E1 is bound to E2 in mature virion. After virus attachment to target cell via host MXRA8 and endocytosis, acidification of the endosome induce dissociation of E1/E2 heterodimer and concomitant trimerization of the E1 subunits. This E1 trimer is fusion active, and promotes release of viral nucleocapsid in cytoplasm after endosome and viral membrane fusion. Efficient fusion requires the presence of cholesterol and sphingolipid in the target membrane. This chain is Structural polyprotein, found in O'nyong-nyong virus (strain Gulu) (ONNV).